The following is a 698-amino-acid chain: DNA ligase (698 aa).

Residues D40–D44, S89–L90, and E123 each bind NAD(+). Residue K125 is the N6-AMP-lysine intermediate of the active site. R146, E184, K300, and K324 together coordinate NAD(+). Residues C418, C421, C436, and C442 each contribute to the Zn(2+) site. In terms of domain architecture, BRCT spans A620–G698.

This sequence belongs to the NAD-dependent DNA ligase family. LigA subfamily. It depends on Mg(2+) as a cofactor. Mn(2+) serves as cofactor.

The enzyme catalyses NAD(+) + (deoxyribonucleotide)n-3'-hydroxyl + 5'-phospho-(deoxyribonucleotide)m = (deoxyribonucleotide)n+m + AMP + beta-nicotinamide D-nucleotide.. In terms of biological role, DNA ligase that catalyzes the formation of phosphodiester linkages between 5'-phosphoryl and 3'-hydroxyl groups in double-stranded DNA using NAD as a coenzyme and as the energy source for the reaction. It is essential for DNA replication and repair of damaged DNA. The polypeptide is DNA ligase (Rhodospirillum rubrum (strain ATCC 11170 / ATH 1.1.1 / DSM 467 / LMG 4362 / NCIMB 8255 / S1)).